Consider the following 32-residue polypeptide: Photosystem II reaction center protein T (32 aa).

Residues 3–23 (AITYTFILFLTLGLLFFAVAF) form a helical membrane-spanning segment.

This sequence belongs to the PsbT family. As to quaternary structure, PSII is composed of 1 copy each of membrane proteins PsbA, PsbB, PsbC, PsbD, PsbE, PsbF, PsbH, PsbI, PsbJ, PsbK, PsbL, PsbM, PsbT, PsbX, PsbY, PsbZ, Psb30/Ycf12, peripheral proteins PsbO, CyanoQ (PsbQ), PsbU, PsbV and a large number of cofactors. It forms dimeric complexes.

The protein localises to the cellular thylakoid membrane. In terms of biological role, found at the monomer-monomer interface of the photosystem II (PS II) dimer, plays a role in assembly and dimerization of PSII. PSII is a light-driven water plastoquinone oxidoreductase, using light energy to abstract electrons from H(2)O, generating a proton gradient subsequently used for ATP formation. This is Photosystem II reaction center protein T from Synechococcus sp. (strain JA-2-3B'a(2-13)) (Cyanobacteria bacterium Yellowstone B-Prime).